The chain runs to 232 residues: Fibrillarin-like rRNA/tRNA 2'-O-methyltransferase (232 aa).

Residues 89-90 (TT), 108-109 (EF), 133-134 (DA), and 153-156 (DIAQ) contribute to the S-adenosyl-L-methionine site.

This sequence belongs to the methyltransferase superfamily. Fibrillarin family. As to quaternary structure, interacts with nop5. Component of box C/D small ribonucleoprotein (sRNP) particles that contain rpl7ae, FlpA and nop5, plus a guide RNA.

Its function is as follows. Involved in pre-rRNA and tRNA processing. Utilizes the methyl donor S-adenosyl-L-methionine to catalyze the site-specific 2'-hydroxyl methylation of ribose moieties in rRNA and tRNA. Site specificity is provided by a guide RNA that base pairs with the substrate. Methylation occurs at a characteristic distance from the sequence involved in base pairing with the guide RNA. This chain is Fibrillarin-like rRNA/tRNA 2'-O-methyltransferase, found in Saccharolobus islandicus (strain M.16.27) (Sulfolobus islandicus).